The chain runs to 63 residues: Large ribosomal subunit protein bL28 (63 aa).

Belongs to the bacterial ribosomal protein bL28 family.

The sequence is that of Large ribosomal subunit protein bL28 from Hydrogenobaculum sp. (strain Y04AAS1).